Consider the following 508-residue polypeptide: 3-octaprenyl-4-hydroxybenzoate carboxy-lyase (508 aa).

Asparagine 178 is a binding site for Mn(2+). Prenylated FMN contacts are provided by residues isoleucine 181–arginine 183, arginine 195–leucine 197, and arginine 200–glycine 201. Mn(2+) is bound at residue glutamate 244. Residue aspartate 303 is the Proton donor of the active site.

This sequence belongs to the UbiD family. Homohexamer. The cofactor is prenylated FMN. Mn(2+) is required as a cofactor.

Its subcellular location is the cell membrane. The catalysed reaction is a 4-hydroxy-3-(all-trans-polyprenyl)benzoate + H(+) = a 2-(all-trans-polyprenyl)phenol + CO2. It participates in cofactor biosynthesis; ubiquinone biosynthesis. Catalyzes the decarboxylation of 3-octaprenyl-4-hydroxy benzoate to 2-octaprenylphenol, an intermediate step in ubiquinone biosynthesis. The sequence is that of 3-octaprenyl-4-hydroxybenzoate carboxy-lyase from Cupriavidus taiwanensis (strain DSM 17343 / BCRC 17206 / CCUG 44338 / CIP 107171 / LMG 19424 / R1) (Ralstonia taiwanensis (strain LMG 19424)).